The following is a 77-amino-acid chain: Large ribosomal subunit protein eL20 (77 aa).

This sequence belongs to the eukaryotic ribosomal protein eL20 family. In terms of assembly, part of the 50S ribosomal subunit. Binds 23S rRNA.

In Thermococcus gammatolerans (strain DSM 15229 / JCM 11827 / EJ3), this protein is Large ribosomal subunit protein eL20.